A 90-amino-acid chain; its full sequence is Probable Fe(2+)-trafficking protein (90 aa).

This sequence belongs to the Fe(2+)-trafficking protein family.

In terms of biological role, could be a mediator in iron transactions between iron acquisition and iron-requiring processes, such as synthesis and/or repair of Fe-S clusters in biosynthetic enzymes. In Pasteurella multocida (strain Pm70), this protein is Probable Fe(2+)-trafficking protein.